Consider the following 328-residue polypeptide: Tryptophan--tRNA ligase (328 aa).

Residues 11–13 and 19–20 contribute to the ATP site; these read QPT and GN. A 'HIGH' region motif is present at residues 12-20; sequence PTGNIHLGN. D135 provides a ligand contact to L-tryptophan. ATP contacts are provided by residues 147–149, I186, and 195–199; these read GED and KMSKS. The 'KMSKS' region motif lies at 195–199; it reads KMSKS.

It belongs to the class-I aminoacyl-tRNA synthetase family. As to quaternary structure, homodimer.

It is found in the cytoplasm. The catalysed reaction is tRNA(Trp) + L-tryptophan + ATP = L-tryptophyl-tRNA(Trp) + AMP + diphosphate + H(+). In terms of biological role, catalyzes the attachment of tryptophan to tRNA(Trp). This is Tryptophan--tRNA ligase from Wolinella succinogenes (strain ATCC 29543 / DSM 1740 / CCUG 13145 / JCM 31913 / LMG 7466 / NCTC 11488 / FDC 602W) (Vibrio succinogenes).